The primary structure comprises 600 residues: Alanine--tRNA ligase (600 aa).

Residues H463, H467, C565, and H569 each contribute to the Zn(2+) site.

Belongs to the class-II aminoacyl-tRNA synthetase family. It depends on Zn(2+) as a cofactor.

It localises to the cytoplasm. The enzyme catalyses tRNA(Ala) + L-alanine + ATP = L-alanyl-tRNA(Ala) + AMP + diphosphate. In terms of biological role, catalyzes the attachment of alanine to tRNA(Ala) in a two-step reaction: alanine is first activated by ATP to form Ala-AMP and then transferred to the acceptor end of tRNA(Ala). Also edits incorrectly charged Ser-tRNA(Ala) and Gly-tRNA(Ala) via its editing domain. This chain is Alanine--tRNA ligase (alaS), found in Treponema denticola (strain ATCC 35405 / DSM 14222 / CIP 103919 / JCM 8153 / KCTC 15104).